The primary structure comprises 100 residues: Large ribosomal subunit protein uL23 (100 aa).

This sequence belongs to the universal ribosomal protein uL23 family. In terms of assembly, part of the 50S ribosomal subunit. Contacts protein L29, and trigger factor when it is bound to the ribosome.

Its function is as follows. One of the early assembly proteins it binds 23S rRNA. One of the proteins that surrounds the polypeptide exit tunnel on the outside of the ribosome. Forms the main docking site for trigger factor binding to the ribosome. This Shewanella piezotolerans (strain WP3 / JCM 13877) protein is Large ribosomal subunit protein uL23.